We begin with the raw amino-acid sequence, 750 residues long: Photosystem I P700 chlorophyll a apoprotein A1 (750 aa).

Helical transmembrane passes span 70-93, 156-179, 195-219, 291-309, 346-369, 385-411, 433-455, and 531-549; these read VFSAHFGQLAIIFIWLSGMYFHGA, LYCTAIGALIFAALMLFAGWFHYH, LNHHLAGLLGLGSLSWAGHQIHVSL, TAHHHLAIAVLFLIAGHMY, WHAQLAINLAMLGSLTIIVAHHMY, LSLFTHHMWIGGFIIVGAAAHAAIFMV, AIVSHLNWVCIFLGFHSFGLYIH, and FLVHHIHAFTIHVTVLILL. [4Fe-4S] cluster-binding residues include Cys573 and Cys582. Helical transmembrane passes span 589-610 and 664-686; these read HVFLGLFWMYNAISVVIFHFSW and LSAYGLLFLGAHFVWAFSLMFLF. Chlorophyll a' is bound at residue His675. Met683 and Tyr691 together coordinate chlorophyll a. Trp692 serves as a coordination point for phylloquinone. A helical membrane pass occupies residues 724 to 744; sequence AVGVAHYLLGGIVTTWAFFLA.

This sequence belongs to the PsaA/PsaB family. In terms of assembly, the PsaA/B heterodimer binds the P700 chlorophyll special pair and subsequent electron acceptors. PSI consists of a core antenna complex that captures photons, and an electron transfer chain that converts photonic excitation into a charge separation. The eukaryotic PSI reaction center is composed of at least 11 subunits. The cofactor is P700 is a chlorophyll a/chlorophyll a' dimer, A0 is one or more chlorophyll a, A1 is one or both phylloquinones and FX is a shared 4Fe-4S iron-sulfur center..

It localises to the plastid. The protein resides in the chloroplast thylakoid membrane. It carries out the reaction reduced [plastocyanin] + hnu + oxidized [2Fe-2S]-[ferredoxin] = oxidized [plastocyanin] + reduced [2Fe-2S]-[ferredoxin]. PsaA and PsaB bind P700, the primary electron donor of photosystem I (PSI), as well as the electron acceptors A0, A1 and FX. PSI is a plastocyanin-ferredoxin oxidoreductase, converting photonic excitation into a charge separation, which transfers an electron from the donor P700 chlorophyll pair to the spectroscopically characterized acceptors A0, A1, FX, FA and FB in turn. Oxidized P700 is reduced on the lumenal side of the thylakoid membrane by plastocyanin. In Pinus koraiensis (Korean pine), this protein is Photosystem I P700 chlorophyll a apoprotein A1.